The primary structure comprises 203 residues: dITP/XTP pyrophosphatase (203 aa).

Residue 8 to 13 coordinates substrate; that stretch reads TANKGK. 2 residues coordinate Mg(2+): Glu-41 and Asp-70. The active-site Proton acceptor is Asp-70. Substrate contacts are provided by residues Ser-71, 153 to 156, Lys-176, and 181 to 182; these read FGYD and HR.

Belongs to the HAM1 NTPase family. As to quaternary structure, homodimer. Mg(2+) is required as a cofactor.

The enzyme catalyses XTP + H2O = XMP + diphosphate + H(+). The catalysed reaction is dITP + H2O = dIMP + diphosphate + H(+). It catalyses the reaction ITP + H2O = IMP + diphosphate + H(+). Functionally, pyrophosphatase that catalyzes the hydrolysis of nucleoside triphosphates to their monophosphate derivatives, with a high preference for the non-canonical purine nucleotides XTP (xanthosine triphosphate), dITP (deoxyinosine triphosphate) and ITP. Seems to function as a house-cleaning enzyme that removes non-canonical purine nucleotides from the nucleotide pool, thus preventing their incorporation into DNA/RNA and avoiding chromosomal lesions. The protein is dITP/XTP pyrophosphatase of Listeria monocytogenes serovar 1/2a (strain ATCC BAA-679 / EGD-e).